Reading from the N-terminus, the 161-residue chain is MSRPLGFIGYEFGDDEMFVQQMIEKKSNAEQAKMLEQQKKMLECTETMPEESEPVPMKCLDFEEAFQSESVSKGYESPYKNISFLKEDAVTVNTMSHCPADDIAKLIRNIQNSVYTLGIEEARQCRRGKLLNVLKPTGSASPRYLQPTPPKNVAEETTGSQ.

The segment at 137 to 161 (TGSASPRYLQPTPPKNVAEETTGSQ) is disordered.

The protein belongs to the lin-52 family. Component of the DRM complex, at least composed of lin-9, lin-35, lin-37, lin-52, lin-53, lin-54- dpl-1 and efl-1. Interacts with zft-11; the interaction is required to suppress the activation of non-neuronal genes in neurons.

It localises to the nucleus. Its function is as follows. Synthetic multivulva class B (synMuvB) protein. SynMuvB proteins are required to repress the induction of vulval development by Ras signaling and probably act by forming the multiprotein DRM complex that represses transcription. In association with the zinc finger protein ztf-11, negatively regulates the expression of non-neuronal genes during neurogenesis. The chain is Protein lin-52 from Caenorhabditis elegans.